Here is a 69-residue protein sequence, read N- to C-terminus: Sec-independent protein translocase protein TatA (69 aa).

Residues 1–21 (MFGLGGQELVLILLIILLLFG) form a helical membrane-spanning segment. The disordered stretch occupies residues 48-69 (EELNKAVDDTPEKEKKSSSEKS).

Belongs to the TatA/E family. Forms a complex with TatC.

The protein resides in the cell inner membrane. Part of the twin-arginine translocation (Tat) system that transports large folded proteins containing a characteristic twin-arginine motif in their signal peptide across membranes. TatA could form the protein-conducting channel of the Tat system. The protein is Sec-independent protein translocase protein TatA of Chlorobium phaeobacteroides (strain BS1).